The chain runs to 102 residues: Cuticle protein AM/CP1114 (102 aa).

One can recognise a Chitin-binding type R&amp;R domain in the interval 16–81; the sequence is DGNFHYSFET…VESPLLPSIP (66 aa). Polar residues predominate over residues 23 to 33; it reads FETSNGIQDTK. The tract at residues 23-50 is disordered; it reads FETSNGIQDTKTGVPGSAGQSNMNGDFS.

Arthrodial membrane and calcified shell.

The sequence is that of Cuticle protein AM/CP1114 from Cancer pagurus (Rock crab).